Consider the following 547-residue polypeptide: Probable hydroxyacid-oxoacid transhydrogenase, mitochondrial (547 aa).

It belongs to the iron-containing alcohol dehydrogenase family. Hydroxyacid-oxoacid transhydrogenase subfamily.

The protein resides in the mitochondrion. It carries out the reaction (S)-3-hydroxybutanoate + 2-oxoglutarate = (R)-2-hydroxyglutarate + acetoacetate. The enzyme catalyses 4-hydroxybutanoate + 2-oxoglutarate = (R)-2-hydroxyglutarate + succinate semialdehyde. Functionally, catalyzes the cofactor-independent reversible oxidation of gamma-hydroxybutyrate (GHB) to succinic semialdehyde (SSA) coupled to reduction of 2-ketoglutarate (2-KG) to D-2-hydroxyglutarate (D-2-HG). L-3-hydroxybutyrate (L-3-OHB) is also a substrate for HOT when using 2-KG as hydrogen acceptor, resulting in the formation of D-2-HG. The polypeptide is Probable hydroxyacid-oxoacid transhydrogenase, mitochondrial (adhfe1) (Dictyostelium discoideum (Social amoeba)).